We begin with the raw amino-acid sequence, 814 residues long: Flagellar radial spoke protein 1 (814 aa).

Asymmetric dimethylarginine is present on R243. The segment at 283–346 (VQSISTGNRE…PPPPAPKVDP (64 aa)) is disordered. Residues 303–329 (PEEDEEEEKEEEKEEPEEGEEGEEGEG) are compositionally biased toward acidic residues. The residue at position 428 (R428) is an Asymmetric dimethylarginine. MORN repeat units lie at residues 577–597 (YFGS…FATG), 600–622 (YAGE…DGGT), 623–645 (YVGE…DGSV), 646–662 (YTGS…GVYW), 671–685 (GEWK…GTYE), and 691–707 (FEGE…ATYT). Residues 739–769 (GIPPGSGDEPQLDEEGQPIEDTDKPPLPAHP) are disordered. Acidic residues predominate over residues 748–758 (PQLDEEGQPIE).

Asymmetrically dimethylated at Arg-243 and Arg-428 during flagellum resorption. Probably methylated by PRMT1.

The protein localises to the cytoplasm. The protein resides in the cytoskeleton. Its subcellular location is the flagellum axoneme. Functionally, flagellar radial spokes contribute to the regulation of dynein arm activity and thus the pattern of flagellar bending. They consist of a thin stalk, which is attached to the a subfiber of the outer doublet microtubule, and a bulbous head, which is attached to the stalk and appears to interact with the projections from the central pair of microtubules. This chain is Flagellar radial spoke protein 1, found in Chlamydomonas reinhardtii (Chlamydomonas smithii).